The sequence spans 239 residues: MRQSGRKSNQLRPISLELSPLINAEGSCLIKIGNTHVMCSASYDTTVPPFLRNQNRGWITAEYSMLPGSTSQRNKREAVQGKQSGRTQEIQRLIGRTMRSIIDLQKLGERQITIDCDVINADGGTRTAAITGSYVALHLAIRSLMKERILKVNPLINQVAAVSCGIYKDQPILDLDYLEDSDAEVDSNFVFAGNGNLIEIQGTAEKKPFSEEQFLEMLKLAKAGVAELFKLQNQVLLNL.

Phosphate-binding positions include arginine 86 and 124–126 (GTR).

It belongs to the RNase PH family. As to quaternary structure, homohexameric ring arranged as a trimer of dimers.

The enzyme catalyses tRNA(n+1) + phosphate = tRNA(n) + a ribonucleoside 5'-diphosphate. Its function is as follows. Phosphorolytic 3'-5' exoribonuclease that plays an important role in tRNA 3'-end maturation. Removes nucleotide residues following the 3'-CCA terminus of tRNAs; can also add nucleotides to the ends of RNA molecules by using nucleoside diphosphates as substrates, but this may not be physiologically important. Probably plays a role in initiation of 16S rRNA degradation (leading to ribosome degradation) during starvation. The polypeptide is Ribonuclease PH (Rickettsia bellii (strain OSU 85-389)).